Reading from the N-terminus, the 447-residue chain is Putative vacuolar cation/proton exchanger 4 (447 aa).

The segment at 1-29 (MDKSEMDKINGTNPESTDQAPSLASRPDE) is disordered. Topologically, residues 1–65 (MDKSEMDKIN…VNWGVFGSMK (65 aa)) are cytoplasmic. Positions 10–22 (NGTNPESTDQAPS) are enriched in polar residues. Residues 66–86 (IVFLKSKLNVLIPCGFLAIFL) form a helical membrane-spanning segment. Residues 87–93 (NYMTQRY) lie on the Extracellular side of the membrane. A helical transmembrane segment spans residues 94-114 (GWVFPLSMLGIIPLAERLGFA). Residues 115–122 (TDWQISCE) are Cytoplasmic-facing. Residues 123-143 (VGRLLNSAFGNATELIISIHA) form a helical membrane-spanning segment. The tract at residues 132–167 (GNATELIISIHALSRGKLHVVQQCLLGSILSNLLLV) is cation selection. Residues 144–159 (LSRGKLHVVQQCLLGS) lie on the Extracellular side of the membrane. The chain crosses the membrane as a helical span at residues 160 to 180 (ILSNLLLVLGSAFFSGGLACG). Residues 181 to 190 (KTMQTFSKAD) lie on the Cytoplasmic side of the membrane. The helical transmembrane segment at 191-211 (AVVNSGLLLMAVMGLLIPAAL) threads the bilayer. Residues 212 to 224 (HYTHSEAQFGKSE) are Extracellular-facing. Residues 225–245 (LALSRFSSCIMLVAYASYLYF) form a helical membrane-spanning segment. Over 246-286 (QLSNNRRRNEANVYPCMPLIKRRIQDDVDGNDDEVPEISKR) the chain is Cytoplasmic. A helical membrane pass occupies residues 287-307 (EAISWIAIFIAWISMLSYYLV). Over 308 to 318 (DAIDGASKAWN) the chain is Extracellular. A helical membrane pass occupies residues 319-339 (IPVAFISVVLLPVVGNSAGHA). The tract at residues 333 to 368 (GNSAGHANAVMFAVKDKLDISLGVAIGSSIQISMFG) is cation selection. Residues 340–353 (NAVMFAVKDKLDIS) are Cytoplasmic-facing. Residues 354 to 374 (LGVAIGSSIQISMFGIPFCVV) form a helical membrane-spanning segment. Residues 375–384 (MGWMMGKPMD) lie on the Extracellular side of the membrane. Residues 385 to 405 (LNFHLFETASLLTTVLVVAFL) form a helical membrane-spanning segment. Residues 406 to 413 (LQDGTSNC) lie on the Cytoplasmic side of the membrane. The chain crosses the membrane as a helical span at residues 414 to 434 (VKGLMLFLCYLIVAASFYVHA). The Extracellular segment spans residues 435 to 447 (DPNSKASEKPPQN).

This sequence belongs to the Ca(2+):cation antiporter (CaCA) (TC 2.A.19) family. Cation/proton exchanger (CAX) subfamily.

Its subcellular location is the vacuole membrane. Vacuolar cation/proton exchanger (CAX). Translocates Ca(2+) and other metal ions into vacuoles using the proton gradient formed by H(+)-ATPase and H(+)-pyrophosphatase. The polypeptide is Putative vacuolar cation/proton exchanger 4 (Oryza sativa subsp. japonica (Rice)).